We begin with the raw amino-acid sequence, 204 residues long: GTP cyclohydrolase 1 (204 aa).

Residues Cys92, His95, and Cys165 each coordinate Zn(2+).

It belongs to the GTP cyclohydrolase I family. Homomer.

It catalyses the reaction GTP + H2O = 7,8-dihydroneopterin 3'-triphosphate + formate + H(+). It functions in the pathway cofactor biosynthesis; 7,8-dihydroneopterin triphosphate biosynthesis; 7,8-dihydroneopterin triphosphate from GTP: step 1/1. This chain is GTP cyclohydrolase 1, found in Mycolicibacterium paratuberculosis (strain ATCC BAA-968 / K-10) (Mycobacterium paratuberculosis).